The following is a 102-amino-acid chain: NADH-quinone oxidoreductase subunit K (102 aa).

A run of 3 helical transmembrane segments spans residues 5–25 (LSHY…GIFL), 31–51 (IVIL…MVAF), and 65–85 (LFIL…LVVF).

Belongs to the complex I subunit 4L family. As to quaternary structure, NDH-1 is composed of 14 different subunits. Subunits NuoA, H, J, K, L, M, N constitute the membrane sector of the complex.

Its subcellular location is the cell inner membrane. It catalyses the reaction a quinone + NADH + 5 H(+)(in) = a quinol + NAD(+) + 4 H(+)(out). Its function is as follows. NDH-1 shuttles electrons from NADH, via FMN and iron-sulfur (Fe-S) centers, to quinones in the respiratory chain. The immediate electron acceptor for the enzyme in this species is believed to be ubiquinone. Couples the redox reaction to proton translocation (for every two electrons transferred, four hydrogen ions are translocated across the cytoplasmic membrane), and thus conserves the redox energy in a proton gradient. In Agrobacterium fabrum (strain C58 / ATCC 33970) (Agrobacterium tumefaciens (strain C58)), this protein is NADH-quinone oxidoreductase subunit K.